Reading from the N-terminus, the 112-residue chain is Integration host factor subunit alpha (112 aa).

Belongs to the bacterial histone-like protein family. In terms of assembly, heterodimer of an alpha and a beta chain.

Functionally, this protein is one of the two subunits of integration host factor, a specific DNA-binding protein that functions in genetic recombination as well as in transcriptional and translational control. This chain is Integration host factor subunit alpha, found in Sinorhizobium fredii (strain NBRC 101917 / NGR234).